A 1818-amino-acid chain; its full sequence is Cytadherence high molecular weight protein 2 (1818 aa).

4 coiled-coil regions span residues 31-880 (LESA…KQRE), 919-1607 (ELKI…DNKH), 1644-1755 (HLFE…QAVQ), and 1786-1817 (LATQ…QKAA).

Phosphorylated mainly on serine residues.

In terms of biological role, component of the cytoskeleton-like structure which stabilizes the shape of the wall-less Mycoplasma. This cytoskeleton-like network of accessory proteins containing HMW proteins 1 to 5 allows the proper anchoring of cytadhesin proteins in the mycoplasmal membrane at the attachment organelle. This is Cytadherence high molecular weight protein 2 (hmw2) from Mycoplasma pneumoniae (strain ATCC 29342 / M129 / Subtype 1) (Mycoplasmoides pneumoniae).